The sequence spans 752 residues: MAAPVVGDADLQSVRRIRLDVLGMSCAACASRVETKLNKIPGVRASVNFATRVATIDAVGMAADELCGVVEKAGYHAAPHTETTVLDKRTKDPDGAHARRLLRRLLVAAVLFVPLADLSTLFAIVPSARVPGWGYILTALAAPVVTWAAWPFHSVALRNARHRTTSMETLISVGIVAATAWSLSSVFGDQPPREGSGIWRAILNSDSIYLEVAAGVTVFVLAGRYFEARAKSKAGSALRALAELGAKNVAVLLPDGAELVIPASELKKRQRFVTRPGETIAADGVVVDGSAAIDMSAMTGEAKPVRAYPAASVVGGTVVMDGRLVIEATAVGADTQFAAMVRLVEQAQTQKARAQRLADHIAGVFVPVVFVIAGLAGAAWLVSGAGADRAFSVTLGVLVIACPCALGLATPTAMMVASGRGAQLGIFIKGYRALETIRSIDTVVFDKTGTLTVGQLAVSTVTMAGSGTSERDREEVLGLAAAVESASEHAMAAAIVAASPDPGPVNGFVAVAGCGVSGEVGGHHVEVGKPSWITRTTPCHDAALVSARLDGESRGETVVFVSVDGVVRAALTIADTLKDSAAAAVAALRSRGLRTILLTGDNRAAADAVAAQVGIDSAVADMLPEGKVDVIQRLREEGHTVAMVGDGINDGPALVGADLGLAIGRGTDVALGAADIILVRDDLNTVPQALDLARATMRTIRMNMIWAFGYNVAAIPIAAAGLLNPLIAGAAMAFSSFFVVSNSLRLRNFGAQ.

In terms of domain architecture, HMA spans 15–78; it reads RRIRLDVLGM…VVEKAGYHAA (64 aa). A metal cation is bound by residues Cys26 and Cys29. The next 6 membrane-spanning stretches (helical) occupy residues 105–125, 132–152, 167–187, 201–221, 361–381, and 390–410; these read LLVA…FAIV, GWGY…AWPF, METL…SSVF, AILN…VFVL, IAGV…AAWL, and AFSV…GLAT. The active-site 4-aspartylphosphate intermediate is the Asp446. Helical transmembrane passes span 491-511 and 714-734; these read MAAA…FVAV and AIPI…AMAF.

The protein belongs to the cation transport ATPase (P-type) (TC 3.A.3) family. Type IB subfamily.

It localises to the cell membrane. The catalysed reaction is ATP + H2O = ADP + phosphate + H(+). This Mycobacterium tuberculosis (strain ATCC 25618 / H37Rv) protein is Cation-transporting P-type ATPase B (ctpB).